Consider the following 181-residue polypeptide: ADP-ribosylation factor 1 (181 aa).

G2 carries the post-translational modification N-acetylglycine; alternate. The N-myristoyl glycine; alternate moiety is linked to residue G2. Residues 3-16 (NIFANLFKGLFGKK) are important for the stable binding to the membranes. Residues 24–32 (GLDAAGKTT), 126–129 (NKQD), and A160 each bind GTP.

The protein belongs to the small GTPase superfamily. Arf family. Interacts (when activated) with GGA1, GGA2 and GGA3; the interaction is required for proper subcellular location of GGA1, GGA2 and GGA3. Interacts with ARHGAP21, ASAP2, GGA1, HERC1, PRKCABP, PIP5K1B, TMED2, PSCD2, TMED10 and GRIA2. Interacts with ARFGAP1, which hydrolyzes GTP and thus, regulates its function. Interacts with PI4KB in the Golgi complex. Interacts with NCS1/FREQ in the Golgi and at the plasma membrane. Interacts with PLEKHA3. Interacts with PLEKHA8; the interaction, together with phosphatidylinositol 4-phosphate binding, is required for FAPP2-mediated glucosylceramide transfer activity. Interacts (activated) with PICK1 (via PDZ domain); the interaction blocks Arp2/3 complex inhibition. Interacts with IQSEC1. Interacts with C9orf72.

The protein resides in the golgi apparatus membrane. Its subcellular location is the synapse. The protein localises to the synaptosome. It is found in the postsynaptic density. It carries out the reaction GTP + H2O = GDP + phosphate + H(+). With respect to regulation, alternates between an inactive GDP-bound form and an active GTP-bound form. Activated by guanine nucleotide-exchange factors (GEFs) and inactivated by GTPase-activating proteins (GAPs). Functionally, small GTPase involved in protein trafficking between different compartments. Modulates vesicle budding and uncoating within the Golgi complex. In its GTP-bound form, triggers the recruitment of coatomer proteins to the Golgi membrane. The hydrolysis of ARF1-bound GTP, which is mediated by ARFGAPs proteins, is required for dissociation of coat proteins from Golgi membranes and vesicles. The GTP-bound form interacts with PICK1 to limit PICK1-mediated inhibition of Arp2/3 complex activity; the function is linked to AMPA receptor (AMPAR) trafficking, regulation of synaptic plasticity of excitatory synapses and spine shrinkage during long-term depression (LTD). Plays a key role in the regulation of intestinal stem cells and gut microbiota, and is essential for maintaining intestinal homeostasis. Also plays a critical role in mast cell expansion but not in mast cell maturation by facilitating optimal mTORC1 activation. This chain is ADP-ribosylation factor 1 (ARF1), found in Bos taurus (Bovine).